Reading from the N-terminus, the 129-residue chain is Small ribosomal subunit protein uS11 (129 aa).

The protein belongs to the universal ribosomal protein uS11 family. In terms of assembly, part of the 30S ribosomal subunit. Interacts with proteins S7 and S18. Binds to IF-3.

Functionally, located on the platform of the 30S subunit, it bridges several disparate RNA helices of the 16S rRNA. Forms part of the Shine-Dalgarno cleft in the 70S ribosome. This Azobacteroides pseudotrichonymphae genomovar. CFP2 protein is Small ribosomal subunit protein uS11.